Here is a 280-residue protein sequence, read N- to C-terminus: Biotin carboxyl carrier protein of acetyl-CoA carboxylase 1, chloroplastic (280 aa).

Residues 1-82 (MASSSFSVTS…SNAAKVDGPS (82 aa)) constitute a chloroplast transit peptide. Residues 52–75 (PSRSSYPVVKAQSNKVSTGASSNA) are compositionally biased toward polar residues. Disordered stretches follow at residues 52 to 106 (PSRS…ATEE) and 164 to 215 (QPSY…GTFY). The segment covering 177-188 (PAAAAPAPSTPA) has biased composition (low complexity). Residues 189–198 (SLPPPSPPTP) show a composition bias toward pro residues. Residues 203–279 (LPTVKSPMAG…SLDTPLFVVQ (77 aa)) enclose the Biotinyl-binding domain. Residue Lys245 is modified to N6-biotinyllysine.

Acetyl-CoA carboxylase is a heterohexamer composed of biotin carboxyl carrier protein, biotin carboxylase and 2 subunits each of ACCase subunit alpha and ACCase plastid-coded subunit beta (accD). As to expression, present in developing tissues from roots, leaves, flowers, siliques and seeds (at protein level).

It is found in the plastid. The protein resides in the chloroplast. Its pathway is lipid metabolism; fatty acid biosynthesis. In terms of biological role, this protein is a component of the acetyl coenzyme A carboxylase complex; first, biotin carboxylase catalyzes the carboxylation of the carrier protein and then the transcarboxylase transfers the carboxyl group to form malonyl-CoA. The protein is Biotin carboxyl carrier protein of acetyl-CoA carboxylase 1, chloroplastic (BCCP1) of Arabidopsis thaliana (Mouse-ear cress).